The primary structure comprises 167 residues: Phospholipase A and acyltransferase 1 (167 aa).

At 1-138 (MAVNDCFSLT…GEGVSEQANR (138 aa)) the chain is on the cytoplasmic side. One can recognise an LRAT domain in the interval 20–135 (LIEVFRPCYQ…LRYGEGVSEQ (116 aa)). The active site involves H30. C119 functions as the Acyl-thioester intermediate in the catalytic mechanism. A helical transmembrane segment spans residues 139–159 (AIGTIGLVAAGIDIFTFLGLF). Residues 160–167 (PKRQRTKY) are Lumenal-facing.

This sequence belongs to the H-rev107 family. Expressed in skeletal muscle, heart, brain, bone marrow and testis. In terms of tissue distribution, abundantly expressed in brain, heart, and skeletal muscle.

It localises to the membrane. The protein resides in the cytoplasm. It is found in the nucleus. The enzyme catalyses a 1,2-diacyl-sn-glycero-3-phosphocholine + H2O = a 1-acyl-sn-glycero-3-phosphocholine + a fatty acid + H(+). It catalyses the reaction a 1,2-diacyl-sn-glycero-3-phosphocholine + H2O = a 2-acyl-sn-glycero-3-phosphocholine + a fatty acid + H(+). It carries out the reaction 1,2-dihexadecanoyl-sn-glycero-3-phosphocholine + H2O = 2-hexadecanoyl-sn-glycero-3-phosphocholine + hexadecanoate + H(+). The catalysed reaction is 1,2-dihexadecanoyl-sn-glycero-3-phosphocholine + H2O = 1-hexadecanoyl-sn-glycero-3-phosphocholine + hexadecanoate + H(+). The enzyme catalyses 1-hexadecanoyl-2-(5Z,8Z,11Z,14Z-eicosatetraenoyl)-sn-glycero-3-phosphoethanolamine + H2O = 2-(5Z,8Z,11Z,14Z)-eicosatetraenoyl-sn-glycero-3-phosphoethanolamine + hexadecanoate + H(+). It catalyses the reaction 1-hexadecanoyl-2-(5Z,8Z,11Z,14Z-eicosatetraenoyl)-sn-glycero-3-phosphoethanolamine + H2O = 1-hexadecanoyl-sn-glycero-3-phosphoethanolamine + (5Z,8Z,11Z,14Z)-eicosatetraenoate + H(+). It carries out the reaction 1,2-di-(9Z-octadecenoyl)-sn-glycero-3-phosphoethanolamine + 1,2-dihexadecanoyl-sn-glycero-3-phosphocholine = hexadecanoyl-sn-glycero-3-phosphocholine + N-hexadecanoyl-1,2-di-(9Z-octadecenoyl)-sn-glycero-3-phosphoethanolamine + H(+). The catalysed reaction is 1,2-dihexadecanoyl-sn-glycero-3-phosphocholine + a 2-acyl-sn-glycero-3-phosphocholine = a 1-hexadecanoyl-2-acyl-sn-glycero-3-phosphocholine + 2-hexadecanoyl-sn-glycero-3-phosphocholine. Exhibits both phospholipase A1/2 and acyltransferase activities. Shows phospholipase A1 (PLA1) and A2 (PLA2) activity, catalyzing the calcium-independent release of fatty acids from the sn-1 or sn-2 position of glycerophospholipids. Shows O-acyltransferase activity, catalyzing the transfer of a fatty acyl group from glycerophospholipid to the hydroxyl group of lysophospholipid. Shows N-acyltransferase activity, catalyzing the calcium-independent transfer of a fatty acyl group at the sn-1 position of phosphatidylcholine (PC) and other glycerophospholipids to the primary amine of phosphatidylethanolamine (PE), forming N-acylphosphatidylethanolamine (NAPE), which serves as precursor for N-acylethanolamines (NAEs). The polypeptide is Phospholipase A and acyltransferase 1 (Mus musculus (Mouse)).